The sequence spans 688 residues: Probable transcription factor gsfR1 (688 aa).

A compositionally biased stretch (acidic residues) spans 1–16; that stretch reads MSDGPETAEGDTDDAV. Residues 1 to 95 are disordered; that stretch reads MSDGPETAEG…TPVSSRGSIA (95 aa). A compositionally biased stretch (polar residues) spans 24 to 36; the sequence is RVASESSARSQPR. The segment covering 58 to 75 has biased composition (basic and acidic residues); sequence EHSKEKNVSRRLPTEKTP.

It localises to the nucleus. In terms of biological role, probable transcription factor that regulates expression of the gene cluster that mediates the biosynthesis of Griseofulvin, an important antifungal drug that has been in use for a long time for treating dermatophyte infections. This is Probable transcription factor gsfR1 from Penicillium aethiopicum.